Reading from the N-terminus, the 113-residue chain is Large ribosomal subunit protein bL17 (113 aa).

Belongs to the bacterial ribosomal protein bL17 family. As to quaternary structure, part of the 50S ribosomal subunit. Contacts protein L32.

The sequence is that of Large ribosomal subunit protein bL17 from Clostridium novyi (strain NT).